We begin with the raw amino-acid sequence, 337 residues long: Neurogenic differentiation factor 6 (337 aa).

The tract at residues 43–82 (LRGKSIKRAPGEETEKEEEEEDREEEDENGLPRRRGLRKK) is disordered. Positions 54 to 71 (EETEKEEEEEDREEEDEN) are enriched in acidic residues. Positions 80 to 86 (RKKKTTK) match the Nuclear localization signal motif. Residues 94 to 146 (FRRQEANARERNRMHGLNDALDNLRKVVPCYSKTQKLSKIETLRLAKNYIWAL) enclose the bHLH domain.

As to quaternary structure, efficient DNA binding requires dimerization with another bHLH protein.

The protein localises to the nucleus. Activates E box-dependent transcription in collaboration with TCF3/E47. May be a trans-acting factor involved in the development and maintenance of the mammalian nervous system. Transactivates the promoter of its own gene. The protein is Neurogenic differentiation factor 6 (NEUROD6) of Bos taurus (Bovine).